A 365-amino-acid chain; its full sequence is DNA replication and repair protein RecF (365 aa).

An ATP-binding site is contributed by 30 to 37 (GDNGEGKT).

This sequence belongs to the RecF family.

It localises to the cytoplasm. Functionally, the RecF protein is involved in DNA metabolism; it is required for DNA replication and normal SOS inducibility. RecF binds preferentially to single-stranded, linear DNA. It also seems to bind ATP. The sequence is that of DNA replication and repair protein RecF from Leptospira interrogans serogroup Icterohaemorrhagiae serovar Lai (strain 56601).